Reading from the N-terminus, the 278-residue chain is Undecaprenyl-diphosphatase 1 (278 aa).

5 consecutive transmembrane segments (helical) span residues 85–105, 108–128, 188–208, 218–238, and 254–274; these read LNVI…EKTI, ALFS…VILW, VATE…TAYE, VDAL…AFAC, and FAWY…SGAL.

Belongs to the UppP family.

The protein resides in the cell inner membrane. It catalyses the reaction di-trans,octa-cis-undecaprenyl diphosphate + H2O = di-trans,octa-cis-undecaprenyl phosphate + phosphate + H(+). Catalyzes the dephosphorylation of undecaprenyl diphosphate (UPP). Confers resistance to bacitracin. The protein is Undecaprenyl-diphosphatase 1 of Paraburkholderia xenovorans (strain LB400).